A 157-amino-acid polypeptide reads, in one-letter code: Class I hydrophobin rodA (157 aa).

An N-terminal signal peptide occupies residues 1 to 41 (MKFSIAAAVVAFAASVAALPPAHDSQFAGNGVGNKGNSNVK). The N-linked (GlcNAc...) asparagine glycan is linked to N47. Cystine bridges form between C57/C131, C65/C125, C66/C106, and C132/C150.

This sequence belongs to the fungal hydrophobin family. As to quaternary structure, self-assembles to form functional amyloid fibrils called rodlets. Self-assembly into fibrillar rodlets occurs spontaneously at hydrophobic:hydrophilic interfaces and the rodlets further associate laterally to form amphipathic monolayers.

It localises to the secreted. Its subcellular location is the spore wall. Aerial growth, conidiation, and dispersal of filamentous fungi in the environment rely upon a capability of their secreting small amphipathic proteins called hydrophobins (HPBs) with low sequence identity. Class I can self-assemble into an outermost layer of rodlet bundles on aerial cell surfaces, conferring cellular hydrophobicity that supports fungal growth, development and dispersal; whereas Class II form highly ordered films at water-air interfaces through intermolecular interactions but contribute nothing to the rodlet structure. RodA is a class I hydrophobin that contributes to surface hydrophobicity, which is important for processes such as association of hyphae in reproductive structures, dispersal of aerial spores and adhesion of pathogens to host structures. Important for the formation of hydrophobic rodlet layers of asexually-produced spores. Promotes also biofilm formation and may enhance lignocellulose utilization via promoting a compact substrate-enzyme-fungus structure. This chain is Class I hydrophobin rodA, found in Emericella nidulans (strain FGSC A4 / ATCC 38163 / CBS 112.46 / NRRL 194 / M139) (Aspergillus nidulans).